Consider the following 448-residue polypeptide: Phosphoglucosamine mutase (448 aa).

S100 functions as the Phosphoserine intermediate in the catalytic mechanism. Mg(2+) contacts are provided by S100, D240, D242, and D244. S100 bears the Phosphoserine mark.

It belongs to the phosphohexose mutase family. Mg(2+) is required as a cofactor. Activated by phosphorylation.

The enzyme catalyses alpha-D-glucosamine 1-phosphate = D-glucosamine 6-phosphate. Catalyzes the conversion of glucosamine-6-phosphate to glucosamine-1-phosphate. This Clostridium tetani (strain Massachusetts / E88) protein is Phosphoglucosamine mutase.